The sequence spans 251 residues: MLNFLNFYSVPLAELEVGKHLYWQIGNLKLHGQVFLTSWFVIGVLVLASVAASSNVKRIPSGIQNLLEYALEFIRDLAKNQIGEKEYRPWVPFVGTLFLFIFVSNWSGALVPFKLIHLPEGELTAPTSDINTTVALALLTSLAYFYAGFSKKGLGYFGNYVQPVSFMLPFKIIEDFTKPLSLSFRLFGNILADELVVGVLVLLVPLFVPLPVMALGLFTSAIQALIFATLAAAYIGEAMEDHHGEEHEEHH.

A run of 5 helical transmembrane segments spans residues 34–54 (VFLT…AASS), 93–113 (FVGT…LVPF), 130–150 (INTT…AGFS), 195–215 (LVVG…VMAL), and 216–236 (GLFT…AYIG).

It belongs to the ATPase A chain family. In terms of assembly, F-type ATPases have 2 components, CF(1) - the catalytic core - and CF(0) - the membrane proton channel. CF(1) has five subunits: alpha(3), beta(3), gamma(1), delta(1), epsilon(1). CF(0) has four main subunits: a, b, b' and c.

The protein localises to the cellular thylakoid membrane. In terms of biological role, key component of the proton channel; it plays a direct role in the translocation of protons across the membrane. This chain is ATP synthase subunit a, found in Nostoc sp. (strain PCC 7120 / SAG 25.82 / UTEX 2576).